A 62-amino-acid chain; its full sequence is MSSVCDVCGKGPGFGMSVSHSHRRTRRRWNPNIQTVRAMVGRTPRRLNVCTSCLKAGKVTRG.

The protein belongs to the bacterial ribosomal protein bL28 family.

The protein is Large ribosomal subunit protein bL28 of Parafrankia sp. (strain EAN1pec).